The chain runs to 353 residues: Protein-arginine kinase (353 aa).

In terms of domain architecture, Phosphagen kinase C-terminal spans 24-256; sequence IVLSSRIRLA…RTVIDTEEQA (233 aa). Residues 27–31, His93, Arg127, 178–182, and 209–214 contribute to the ATP site; these read SSRIR, RASVM, and RGLYGE. Positions 339–344 match the RDXXRA motif of the pArg binding pocket involved in allosteric regulation motif; sequence RDVRRA.

The protein belongs to the ATP:guanido phosphotransferase family.

The enzyme catalyses L-arginyl-[protein] + ATP = N(omega)-phospho-L-arginyl-[protein] + ADP + H(+). Appears to be allosterically activated by the binding of pArg-containing polypeptides to the pArg-binding pocket localized in the C-terminal domain of McsB. Its function is as follows. Catalyzes the specific phosphorylation of arginine residues in proteins. The chain is Protein-arginine kinase from Symbiobacterium thermophilum (strain DSM 24528 / JCM 14929 / IAM 14863 / T).